We begin with the raw amino-acid sequence, 538 residues long: Bifunctional purine biosynthesis protein PurH (538 aa).

In terms of domain architecture, MGS-like spans P11–T158.

Belongs to the PurH family.

It carries out the reaction (6R)-10-formyltetrahydrofolate + 5-amino-1-(5-phospho-beta-D-ribosyl)imidazole-4-carboxamide = 5-formamido-1-(5-phospho-D-ribosyl)imidazole-4-carboxamide + (6S)-5,6,7,8-tetrahydrofolate. The catalysed reaction is IMP + H2O = 5-formamido-1-(5-phospho-D-ribosyl)imidazole-4-carboxamide. It participates in purine metabolism; IMP biosynthesis via de novo pathway; 5-formamido-1-(5-phospho-D-ribosyl)imidazole-4-carboxamide from 5-amino-1-(5-phospho-D-ribosyl)imidazole-4-carboxamide (10-formyl THF route): step 1/1. Its pathway is purine metabolism; IMP biosynthesis via de novo pathway; IMP from 5-formamido-1-(5-phospho-D-ribosyl)imidazole-4-carboxamide: step 1/1. The protein is Bifunctional purine biosynthesis protein PurH of Bartonella bacilliformis (strain ATCC 35685 / KC583 / Herrer 020/F12,63).